We begin with the raw amino-acid sequence, 403 residues long: GTPase Obg (403 aa).

The Obg domain maps to 1–159 (MKFIDESLIR…RDLLLELMLL (159 aa)). An OBG-type G domain is found at 160 to 333 (ADVGMLGFPN…LCRDIMDFII (174 aa)). GTP contacts are provided by residues 166–173 (GFPNAGKS), 191–195 (FTTLV), 213–216 (DIPG), 283–286 (NKID), and 314–316 (SAA). Mg(2+)-binding residues include Ser-173 and Thr-193. The segment at 364–403 (YQFDDDEDWDDDWTEEDDDEDWDDDWSEEDDEGIEFIYKP) is disordered. A compositionally biased stretch (acidic residues) spans 365-397 (QFDDDEDWDDDWTEEDDDEDWDDDWSEEDDEGI).

Belongs to the TRAFAC class OBG-HflX-like GTPase superfamily. OBG GTPase family. As to quaternary structure, monomer. Mg(2+) serves as cofactor.

The protein resides in the cytoplasm. Its function is as follows. An essential GTPase which binds GTP, GDP and possibly (p)ppGpp with moderate affinity, with high nucleotide exchange rates and a fairly low GTP hydrolysis rate. Plays a role in control of the cell cycle, stress response, ribosome biogenesis and in those bacteria that undergo differentiation, in morphogenesis control. This is GTPase Obg from Haemophilus influenzae (strain PittGG).